Reading from the N-terminus, the 370-residue chain is Ubiquitin carboxyl-terminal hydrolase 46 (370 aa).

In terms of domain architecture, USP spans 35 to 369 (FGLVNFGNTC…SGYILFYQSR (335 aa)). The Nucleophile role is filled by Cys-44. Residues Cys-186, Cys-189, Cys-233, and Cys-236 each coordinate Zn(2+). The active-site Proton acceptor is the His-317.

The protein belongs to the peptidase C19 family. USP12/USP46 subfamily. In terms of assembly, interacts with WDR48.

It carries out the reaction Thiol-dependent hydrolysis of ester, thioester, amide, peptide and isopeptide bonds formed by the C-terminal Gly of ubiquitin (a 76-residue protein attached to proteins as an intracellular targeting signal).. In terms of biological role, deubiquitinating enzyme that plays a role in behavior, possibly by regulating GABA action. Has almost no deubiquitinating activity by itself and requires the interaction with wdr48 to have a high activity. The polypeptide is Ubiquitin carboxyl-terminal hydrolase 46 (usp46) (Danio rerio (Zebrafish)).